The primary structure comprises 169 residues: Ureidoglycolate lyase (169 aa).

It belongs to the ureidoglycolate lyase family. As to quaternary structure, homodimer. Requires Ni(2+) as cofactor.

The enzyme catalyses (S)-ureidoglycolate = urea + glyoxylate. Its pathway is nitrogen metabolism; (S)-allantoin degradation. Catalyzes the catabolism of the allantoin degradation intermediate (S)-ureidoglycolate, generating urea and glyoxylate. Involved in the utilization of allantoin as nitrogen source. In Brucella anthropi (strain ATCC 49188 / DSM 6882 / CCUG 24695 / JCM 21032 / LMG 3331 / NBRC 15819 / NCTC 12168 / Alc 37) (Ochrobactrum anthropi), this protein is Ureidoglycolate lyase.